The following is a 453-amino-acid chain: Formimidoylglutamate deiminase (453 aa).

The Zn(2+) site is built by His-56 and His-58. N-formimidoyl-L-glutamate is bound by residues Gln-61, Arg-82, Tyr-121, His-206, and Arg-209. His-232 is a binding site for Zn(2+). Residue Glu-235 participates in N-formimidoyl-L-glutamate binding. Catalysis depends on proton acceptor residues His-269 and Asp-320. Asp-320 is a binding site for Zn(2+).

Belongs to the metallo-dependent hydrolases superfamily. As to quaternary structure, homodimer. The cofactor is Zn(2+).

The enzyme catalyses N-formimidoyl-L-glutamate + H2O = N-formyl-L-glutamate + NH4(+). It functions in the pathway amino-acid degradation; L-histidine degradation into L-glutamate; L-glutamate from N-formimidoyl-L-glutamate (deiminase route): step 1/2. Inhibited by the metal chelator dipicolinate. Inhibited by N-formimino-L-aspartate and N-guanidino-L-glutaric acid. Catalyzes the hydrolysis of N-formimino-L-glutamate to N-formyl-L-glutamate and ammonia. This Pseudomonas aeruginosa (strain ATCC 15692 / DSM 22644 / CIP 104116 / JCM 14847 / LMG 12228 / 1C / PRS 101 / PAO1) protein is Formimidoylglutamate deiminase.